The chain runs to 183 residues: Capsid protein (183 aa).

The tract at residues 136–183 is disordered; that stretch reads NAPILSTLPETTVVRRRGRSPRRRTPSPRRRRSQSPRRRRSQSPASQC. Residues 149 to 176 show a composition bias toward basic residues; that stretch reads VRRRGRSPRRRTPSPRRRRSQSPRRRRS. Phosphoserine; by host occurs at positions 155, 162, and 170. A 1; half-length repeat occupies 155–161; sequence SPRRRTP. The segment at 155-177 is 3 X 8 AA repeats of S-P-R-R-R-[PR]-S-Q; it reads SPRRRTPSPRRRRSQSPRRRRSQ. The Bipartite nuclear localization signal signature appears at 158 to 175; the sequence is RRTPSPRRRRSQSPRRRR. 2 consecutive repeat copies span residues 162-169 and 170-177. Residues 177–183 form an RNA binding region; it reads QSPASQC.

It belongs to the orthohepadnavirus core antigen family. In terms of assembly, homodimerizes, then multimerizes. Interacts with cytosol exposed regions of viral L glycoprotein present in the reticulum-to-Golgi compartment. Interacts with human FLNB. Phosphorylated form interacts with host importin alpha; this interaction depends on the exposure of the NLS, which itself depends upon genome maturation and/or phosphorylation of the capsid protein. Interacts with host NUP153. In terms of processing, phosphorylated by host SRPK1, SRPK2, and maybe protein kinase C or GAPDH. Phosphorylation is critical for pregenomic RNA packaging. Protein kinase C phosphorylation is stimulated by HBx protein and may play a role in transport of the viral genome to the nucleus at the late step during the viral replication cycle.

It is found in the virion. The protein resides in the host cytoplasm. In terms of biological role, self assembles to form an icosahedral capsid. Most capsids appear to be large particles with an icosahedral symmetry of T=4 and consist of 240 copies of capsid protein, though a fraction forms smaller T=3 particles consisting of 180 capsid proteins. Entering capsids are transported along microtubules to the nucleus. Phosphorylation of the capsid is thought to induce exposure of nuclear localization signal in the C-terminal portion of the capsid protein that allows binding to the nuclear pore complex via the importin (karyopherin-) alpha and beta. Capsids are imported in intact form through the nuclear pore into the nuclear basket, where it probably binds NUP153. Only capsids that contain the mature viral genome can release the viral DNA and capsid protein into the nucleoplasm. Immature capsids get stuck in the basket. Capsids encapsulate the pre-genomic RNA and the P protein. Pre-genomic RNA is reverse-transcribed into DNA while the capsid is still in the cytoplasm. The capsid can then either be directed to the nucleus, providing more genomes for transcription, or bud through the endoplasmic reticulum to provide new virions. In Hepatitis B virus genotype F2 (isolate Brazil/w4B) (HBV-F), this protein is Capsid protein.